A 345-amino-acid chain; its full sequence is D-fructose 1,6-bisphosphatase class 2/sedoheptulose 1,7-bisphosphatase (345 aa).

Residues D33, E57, D97, and E100 each coordinate Mn(2+). Substrate is bound by residues 100-102 (EGT), Y131, 176-178 (RPR), and 198-200 (DGD). E225 lines the Mn(2+) pocket.

It belongs to the FBPase class 2 family. As to quaternary structure, homotetramer. Requires Mn(2+) as cofactor.

The catalysed reaction is beta-D-fructose 1,6-bisphosphate + H2O = beta-D-fructose 6-phosphate + phosphate. It carries out the reaction D-sedoheptulose 1,7-bisphosphate + H2O = D-sedoheptulose 7-phosphate + phosphate. It functions in the pathway carbohydrate biosynthesis; Calvin cycle. In terms of biological role, catalyzes the hydrolysis of fructose 1,6-bisphosphate (Fru 1,6-P2) and sedoheptulose 1,7-bisphosphate (Sed 1,7-P2) to fructose 6-phosphate and sedoheptulose 7-phosphate, respectively. This is D-fructose 1,6-bisphosphatase class 2/sedoheptulose 1,7-bisphosphatase from Synechocystis sp. (strain ATCC 27184 / PCC 6803 / Kazusa).